The following is a 606-amino-acid chain: Probable translation initiation factor IF-2 (606 aa).

Residues 11–230 enclose the tr-type G domain; that stretch reads IRQPIVVVLG…LTGLVQRFMK (220 aa). The tract at residues 20-27 is G1; that stretch reads GHVDHGKT. GTP is bound at residue 20–27; it reads GHVDHGKT. The interval 45–49 is G2; it reads EITQH. The interval 85-88 is G3; sequence DTPG. Residues 85–89 and 139–142 each bind GTP; these read DTPGH and NKID. The tract at residues 139 to 142 is G4; it reads NKID. Residues 207–209 are G5; sequence SAK.

Belongs to the TRAFAC class translation factor GTPase superfamily. Classic translation factor GTPase family. IF-2 subfamily.

In terms of biological role, function in general translation initiation by promoting the binding of the formylmethionine-tRNA to ribosomes. Seems to function along with eIF-2. The protein is Probable translation initiation factor IF-2 of Staphylothermus marinus (strain ATCC 43588 / DSM 3639 / JCM 9404 / F1).